The primary structure comprises 388 residues: Homeobox protein XHOX-3 (388 aa).

Disordered stretches follow at residues 30–109 (AVGS…SDFY) and 131–163 (SAGQ…FSAC). Composition is skewed to polar residues over residues 68 to 81 (ATGQ…QLRI) and 91 to 103 (DSLS…SSSD). Positions 168-227 (MRRYRTAFTREQIARLEKEFYRENYVSRPRRCELAAALNLPETTIKVWFQNRRMKDKRQR) form a DNA-binding region, homeobox.

Belongs to the even-skipped homeobox family.

The protein resides in the nucleus. May be required for posterior development and development of normal embryonic axial pattern. This Xenopus laevis (African clawed frog) protein is Homeobox protein XHOX-3 (xhox3).